A 426-amino-acid chain; its full sequence is Dynein regulatory complex protein 10 (426 aa).

Disordered stretches follow at residues 18–37 (TRIG…LKPL) and 399–426 (SKKK…KGKK). The IQ domain maps to 377-406 (MVRAATLIQAFWKGYLVRSLLRSKKKRGKG). Residues 399–408 (SKKKRGKGKA) show a composition bias toward basic residues. Over residues 409–426 (KGKEKGKQKGKEKGKGKK) the composition is skewed to basic and acidic residues.

Belongs to the DRC10 family. As to quaternary structure, component of the nexin-dynein regulatory complex (N-DRC). Interacts with CFAP52.

It is found in the cytoplasm. Its subcellular location is the cytoskeleton. The protein resides in the flagellum axoneme. In terms of biological role, component of the nexin-dynein regulatory complex (N-DRC), a key regulator of ciliary/flagellar motility which maintains the alignment and integrity of the distal axoneme and regulates microtubule sliding in motile axonemes. The sequence is that of Dynein regulatory complex protein 10 (IQCD) from Macaca fascicularis (Crab-eating macaque).